The following is a 206-amino-acid chain: Superoxide dismutase [Mn] (206 aa).

The Mn(2+) site is built by histidine 27, histidine 82, aspartate 168, and histidine 172.

It belongs to the iron/manganese superoxide dismutase family. Homodimer. Mn(2+) serves as cofactor.

It catalyses the reaction 2 superoxide + 2 H(+) = H2O2 + O2. In terms of biological role, destroys superoxide anion radicals which are normally produced within the cells and which are toxic to biological systems. The chain is Superoxide dismutase [Mn] (sodA) from Salmonella typhi.